We begin with the raw amino-acid sequence, 202 residues long: MSLVPMVVETTNRGERAYDIYSRLLKERVVFLVGQVEEHMANLVVAQLLFLESENPEKDIHLYINSPGGSVTAGMAIYDTMQFIRPSVSTLCIGQAASMGAVLLAAGEAGKRLVLPNARVMIHQPLGGFSGQASDFEIHAREILRIRENLNQVLSHHTGKPLEQVQLDTERDNFLSATEAVEYGLVDKVISHRELPEAEAES.

S98 serves as the catalytic Nucleophile. The active site involves H123.

It belongs to the peptidase S14 family. As to quaternary structure, fourteen ClpP subunits assemble into 2 heptameric rings which stack back to back to give a disk-like structure with a central cavity, resembling the structure of eukaryotic proteasomes.

It is found in the cytoplasm. The enzyme catalyses Hydrolysis of proteins to small peptides in the presence of ATP and magnesium. alpha-casein is the usual test substrate. In the absence of ATP, only oligopeptides shorter than five residues are hydrolyzed (such as succinyl-Leu-Tyr-|-NHMec, and Leu-Tyr-Leu-|-Tyr-Trp, in which cleavage of the -Tyr-|-Leu- and -Tyr-|-Trp bonds also occurs).. In terms of biological role, cleaves peptides in various proteins in a process that requires ATP hydrolysis. Has a chymotrypsin-like activity. Plays a major role in the degradation of misfolded proteins. The protein is ATP-dependent Clp protease proteolytic subunit of Magnetococcus marinus (strain ATCC BAA-1437 / JCM 17883 / MC-1).